The primary structure comprises 255 residues: Type III pantothenate kinase (255 aa).

12-19 (DIGNSYTK) contacts ATP. Residue 109 to 112 (GDDL) coordinates substrate. The active-site Proton acceptor is the Asp111. Thr133 serves as a coordination point for ATP. Thr185 serves as a coordination point for substrate.

The protein belongs to the type III pantothenate kinase family. As to quaternary structure, homodimer. It depends on NH4(+) as a cofactor. The cofactor is K(+).

It localises to the cytoplasm. It carries out the reaction (R)-pantothenate + ATP = (R)-4'-phosphopantothenate + ADP + H(+). The protein operates within cofactor biosynthesis; coenzyme A biosynthesis; CoA from (R)-pantothenate: step 1/5. Its function is as follows. Catalyzes the phosphorylation of pantothenate (Pan), the first step in CoA biosynthesis. This Malacoplasma penetrans (strain HF-2) (Mycoplasma penetrans) protein is Type III pantothenate kinase.